A 446-amino-acid polypeptide reads, in one-letter code: ATP-dependent RNA helicase SUB2 (446 aa).

Position 2 is an N-acetylserine (S2). Residues S13 and S37 each carry the phosphoserine modification. Low complexity predominate over residues 23–41; the sequence is ASKAAEAGETGAATSATEG. The segment at 23–52 is disordered; it reads ASKAAEAGETGAATSATEGDNNNNTAAGDK. The Q motif motif lies at 62-90; that stretch reads TGFKDFLLKPELSRAIIDCGFEHPSEVQQ. Residues 93 to 268 enclose the Helicase ATP-binding domain; that stretch reads IPQSIHGTDV…RRFLQNPLEI (176 aa). 106-113 lines the ATP pocket; that stretch reads AKSGLGKT. Position 169 is a phosphothreonine (T169). Positions 215-218 match the DECD box motif; sequence DECD. The region spanning 280 to 441 is the Helicase C-terminal domain; sequence GLQQYYIKLE…EFPEEGIDPS (162 aa).

This sequence belongs to the DEAD box helicase family. DECD subfamily. Component of the TREX complex composed of at least SUB2, TEX1, YRA1 and the four THO complex components: HPR1, MFT1, THO2 and THP1. Interacts with HPR1, YRA1, and YRA2. SUB2 may mediate the interaction between the THO complex and YRA1. Associates with growing mRNP complexes during transcription. This association requires the presence of HPR1. Also interacts with SAC3. Interacts with THO1 in the presence of RNA; this interaction facilitates RNA binding of SUB2.

It localises to the nucleus. The catalysed reaction is ATP + H2O = ADP + phosphate + H(+). ATP-binding RNA helicase component of the TREX complex involved in transcription elongation and required for the export of mRNA out of the nucleus. SUB2 also plays a role in pre-mRNA splicing and spliceosome assembly. May be involved in rDNA and telomeric silencing, and maintenance of genome integrity. Associates with THO1, which facilitates RNA binding of SUB2 and likely plays a role in mRNA export. This is ATP-dependent RNA helicase SUB2 (SUB2) from Saccharomyces cerevisiae (strain ATCC 204508 / S288c) (Baker's yeast).